Here is a 190-residue protein sequence, read N- to C-terminus: Xanthine phosphoribosyltransferase (190 aa).

Positions 20 and 27 each coordinate xanthine. 128 to 132 (ANGKA) is a 5-phospho-alpha-D-ribose 1-diphosphate binding site. Position 156 (Lys-156) interacts with xanthine.

Belongs to the purine/pyrimidine phosphoribosyltransferase family. Xpt subfamily. As to quaternary structure, homodimer.

It is found in the cytoplasm. It carries out the reaction XMP + diphosphate = xanthine + 5-phospho-alpha-D-ribose 1-diphosphate. Its pathway is purine metabolism; XMP biosynthesis via salvage pathway; XMP from xanthine: step 1/1. Its function is as follows. Converts the preformed base xanthine, a product of nucleic acid breakdown, to xanthosine 5'-monophosphate (XMP), so it can be reused for RNA or DNA synthesis. The sequence is that of Xanthine phosphoribosyltransferase from Pseudomonas putida (strain ATCC 700007 / DSM 6899 / JCM 31910 / BCRC 17059 / LMG 24140 / F1).